The primary structure comprises 438 residues: uncharacterized protein (438 aa).

This is an uncharacterized protein from Encephalitozoon cuniculi (strain GB-M1) (Microsporidian parasite).